The following is a 740-amino-acid chain: MGSSTGRRGLMPEAAKLIRSSDADAIARGRHGDPFAVLGPHAVKGGTVIRTFQPQARTVFVLAADGETEMSRAHPDGLFAVKLKGSPAYRLRAVRHDGGTEELDDPYRFPPVLGDLDVHLLAEGTHLRTFEKLGAQVRIVDGVAGVDFALWAPNASRVSVVGDFNGWDGRRHPMRLRHEAGMWEIFIPGLGQGAVYKYEIVASDGRLLPLKADPYGHFAEVPPKTASVVWELGRRDWADADWMAAQKARNDRHAPISIYEVHLGSWRRVPEDCNRPLSYLEMADQLGDYVADLGFTHVEFLPIHEHPFGGSWGYQPVGLFAPTSRYGTPDEFRTLVDRLHQKGIGVIIDWVAGHFPNDPHGLHHFDGTHLYEHEDPRLGVHKDWNTLIYNYGRSEVVNYLYANALYWLEQYHVDGLRVDAVASMLYLDYSREPGEWIPNRHGGNENLEAIDFLRRMNMLVYAEHPGAMTIAEESTAWPMVSRPVHLGGLGFGYKWNMGWMHDTLRYFSKDPIHRRYHHDSLTFAQLYAYHENFVLPLSHDEVVHGKGSIFGRMPGDPWQRFANLRAYYGFMWTQPGKKLLFMGQEFAQQSEWNEDASLDWHLLGDGRNEGVMRLIRDLNRLYRTEPALHQLDNEPAGFAWIDCNDRDNSVLTWLRKGFDPGDFLVVAGNYTPMVRDSYRIGVPEPGWYRELLNTDSEWYGGANIHNGGGVHTEEVPWHGHGFSICLRLPPLATCVFKRER.

The Nucleophile role is filled by aspartate 419. Glutamate 472 acts as the Proton donor in catalysis.

It belongs to the glycosyl hydrolase 13 family. GlgB subfamily. Monomer.

It catalyses the reaction Transfers a segment of a (1-&gt;4)-alpha-D-glucan chain to a primary hydroxy group in a similar glucan chain.. It participates in glycan biosynthesis; glycogen biosynthesis. Its function is as follows. Catalyzes the formation of the alpha-1,6-glucosidic linkages in glycogen by scission of a 1,4-alpha-linked oligosaccharide from growing alpha-1,4-glucan chains and the subsequent attachment of the oligosaccharide to the alpha-1,6 position. This is 1,4-alpha-glucan branching enzyme GlgB from Paramagnetospirillum magneticum (strain ATCC 700264 / AMB-1) (Magnetospirillum magneticum).